The sequence spans 244 residues: Methylthioribulose-1-phosphate dehydratase (244 aa).

Cysteine 104 lines the substrate pocket. Residues histidine 122 and histidine 124 each coordinate Zn(2+). Glutamate 148 (proton donor/acceptor) is an active-site residue. Histidine 204 serves as a coordination point for Zn(2+).

The protein belongs to the aldolase class II family. MtnB subfamily. Zn(2+) is required as a cofactor.

The protein resides in the cytoplasm. The enzyme catalyses 5-(methylsulfanyl)-D-ribulose 1-phosphate = 5-methylsulfanyl-2,3-dioxopentyl phosphate + H2O. The protein operates within amino-acid biosynthesis; L-methionine biosynthesis via salvage pathway; L-methionine from S-methyl-5-thio-alpha-D-ribose 1-phosphate: step 2/6. In terms of biological role, catalyzes the dehydration of methylthioribulose-1-phosphate (MTRu-1-P) into 2,3-diketo-5-methylthiopentyl-1-phosphate (DK-MTP-1-P). The sequence is that of Methylthioribulose-1-phosphate dehydratase from Cryptococcus neoformans var. neoformans serotype D (strain B-3501A) (Filobasidiella neoformans).